The primary structure comprises 275 residues: MGIRSFRPYTPGTRQATVSDFSEITKSKPEKSLTKYKHRKKGRNNRGVITCRHRGGGHKRLYRLIDFRRDKRDITAQVTAIEYDPNRNARIALVQYEDGEKRYILQPAGLGVGDTIIAGEEAPYEIGNALPLYKIPLGTEIHNIELYAGRGGQMVRSAGAFAQLVAKEGDYVTIKLPSKEVRMVRKECYATIGKVGNAEARNLKLGKAGRTRHLGRRPQVRGSVMNPVDHPHGGGEGRAPIGRSGPVTPWGKPALGKKTRKKKKQSSSLIVRRRR.

2 disordered regions span residues 1–24 (MGIRSFRPYTPGTRQATVSDFSEI) and 208–275 (AGRT…RRRR). A compositionally biased stretch (polar residues) spans 12–22 (GTRQATVSDFS). Composition is skewed to basic residues over residues 208 to 219 (AGRTRHLGRRPQ) and 255 to 275 (LGKKTRKKKKQSSSLIVRRRR).

This sequence belongs to the universal ribosomal protein uL2 family. As to quaternary structure, part of the 50S ribosomal subunit. Forms a bridge to the 30S subunit in the 70S ribosome.

In terms of biological role, one of the primary rRNA binding proteins. Required for association of the 30S and 50S subunits to form the 70S ribosome, for tRNA binding and peptide bond formation. It has been suggested to have peptidyltransferase activity; this is somewhat controversial. Makes several contacts with the 16S rRNA in the 70S ribosome. This is Large ribosomal subunit protein uL2 from Picosynechococcus sp. (strain ATCC 27264 / PCC 7002 / PR-6) (Agmenellum quadruplicatum).